A 227-amino-acid polypeptide reads, in one-letter code: Adenosylcobinamide-GDP ribazoletransferase (227 aa).

5 helical membrane passes run 3–23 (CLKA…ELDF), 26–46 (IWAT…AVYF), 95–115 (GVGG…ARPE), 117–137 (WLDY…VAAY), and 165–185 (AVAA…SLFF).

It belongs to the CobS family. It depends on Mg(2+) as a cofactor.

Its subcellular location is the cell membrane. The catalysed reaction is alpha-ribazole + adenosylcob(III)inamide-GDP = adenosylcob(III)alamin + GMP + H(+). The enzyme catalyses alpha-ribazole 5'-phosphate + adenosylcob(III)inamide-GDP = adenosylcob(III)alamin 5'-phosphate + GMP + H(+). It participates in cofactor biosynthesis; adenosylcobalamin biosynthesis; adenosylcobalamin from cob(II)yrinate a,c-diamide: step 7/7. Joins adenosylcobinamide-GDP and alpha-ribazole to generate adenosylcobalamin (Ado-cobalamin). Also synthesizes adenosylcobalamin 5'-phosphate from adenosylcobinamide-GDP and alpha-ribazole 5'-phosphate. The protein is Adenosylcobinamide-GDP ribazoletransferase of Pyrobaculum islandicum (strain DSM 4184 / JCM 9189 / GEO3).